A 101-amino-acid chain; its full sequence is CRISPR-associated endoribonuclease Cas2 (101 aa).

D8 lines the Mg(2+) pocket.

The protein belongs to the CRISPR-associated endoribonuclease Cas2 protein family. Homodimer, forms a heterotetramer with a Cas1 homodimer. Requires Mg(2+) as cofactor.

In terms of biological role, CRISPR (clustered regularly interspaced short palindromic repeat), is an adaptive immune system that provides protection against mobile genetic elements (viruses, transposable elements and conjugative plasmids). CRISPR clusters contain sequences complementary to antecedent mobile elements and target invading nucleic acids. CRISPR clusters are transcribed and processed into CRISPR RNA (crRNA). Functions as a ssRNA-specific endoribonuclease. Involved in the integration of spacer DNA into the CRISPR cassette. The sequence is that of CRISPR-associated endoribonuclease Cas2 from Lacticaseibacillus rhamnosus (strain ATCC 53103 / LMG 18243 / GG) (Lactobacillus rhamnosus).